Reading from the N-terminus, the 281-residue chain is Feruloyl esterase A (281 aa).

The N-terminal stretch at 1 to 21 (MKQFSAKYALILLATAGQALA) is a signal peptide. 3 disulfides stabilise this stretch: Cys-50–Cys-279, Cys-112–Cys-115, and Cys-248–Cys-255. Position 98 (Asp-98) interacts with substrate. The N-linked (GlcNAc...) asparagine glycan is linked to Asn-100. Tyr-101 provides a ligand contact to substrate. The Nucleophile role is filled by Ser-154. Asp-215 (charge relay system) is an active-site residue. A substrate-binding site is contributed by His-268. His-268 acts as the Charge relay system in catalysis.

In terms of processing, glycosylated.

The protein resides in the secreted. It catalyses the reaction feruloyl-polysaccharide + H2O = ferulate + polysaccharide.. Its activity is regulated as follows. Inhibited by the specific serine esterase inhibitor diisopropylfluorophosphate. In terms of biological role, involved in degradation of plant cell walls. Hydrolyzes the feruloyl-arabinose ester bond in arabinoxylans, and the feruloyl-galactose ester bond in pectin. Binds to cellulose. The polypeptide is Feruloyl esterase A (faeA) (Aspergillus niger).